A 445-amino-acid chain; its full sequence is Probable D-serine dehydratase (445 aa).

Lys111 carries the post-translational modification N6-(pyridoxal phosphate)lysine.

The protein belongs to the serine/threonine dehydratase family. DsdA subfamily. Requires pyridoxal 5'-phosphate as cofactor.

The enzyme catalyses D-serine = pyruvate + NH4(+). In Burkholderia pseudomallei (strain 1710b), this protein is Probable D-serine dehydratase.